We begin with the raw amino-acid sequence, 221 residues long: Adenylate kinase (221 aa).

10 to 15 contacts ATP; the sequence is GAGKGT. The NMP stretch occupies residues 30-59; that stretch reads STGDMLRAAVKAGTPLGLEAKRFMDAGELV. AMP is bound by residues Thr-31, Arg-36, 57–59, 85–88, and Gln-92; these read ELV and GFPR. The interval 122–159 is LID; the sequence is GRRSHAASGRTYHVKFNPPKVEGVDDMTGEPLIQRDDD. Residues Arg-123 and 132 to 133 each bind ATP; that span reads TY. 2 residues coordinate AMP: Arg-156 and Arg-167. Gly-207 serves as a coordination point for ATP.

Belongs to the adenylate kinase family. Monomer.

The protein resides in the cytoplasm. The enzyme catalyses AMP + ATP = 2 ADP. The protein operates within purine metabolism; AMP biosynthesis via salvage pathway; AMP from ADP: step 1/1. Catalyzes the reversible transfer of the terminal phosphate group between ATP and AMP. Plays an important role in cellular energy homeostasis and in adenine nucleotide metabolism. This Paraburkholderia phytofirmans (strain DSM 17436 / LMG 22146 / PsJN) (Burkholderia phytofirmans) protein is Adenylate kinase.